We begin with the raw amino-acid sequence, 120 residues long: MSRKLEALDRRKARVRRALRAAANGRPRLSVFRSSKQIYVQVIDDVAGKTLASASSIDKALKGELKTGADVAAATAVGKLVAERAKAAGVTKVIFDRSGYIYHGRVKAVAEAAREGGLEF.

The protein belongs to the universal ribosomal protein uL18 family. In terms of assembly, part of the 50S ribosomal subunit; part of the 5S rRNA/L5/L18/L25 subcomplex. Contacts the 5S and 23S rRNAs.

Its function is as follows. This is one of the proteins that bind and probably mediate the attachment of the 5S RNA into the large ribosomal subunit, where it forms part of the central protuberance. The sequence is that of Large ribosomal subunit protein uL18 from Methylobacterium radiotolerans (strain ATCC 27329 / DSM 1819 / JCM 2831 / NBRC 15690 / NCIMB 10815 / 0-1).